The following is a 162-amino-acid chain: Non-specific lipid transfer protein GPI-anchored 27 (162 aa).

An N-terminal signal peptide occupies residues 1–29; the sequence is MAYTNKVAVAVGAAVVFLAVVMNPRWTEA. 4 disulfide bridges follow: Cys-39–Cys-78, Cys-50–Cys-62, Cys-63–Cys-102, and Cys-76–Cys-110. The N-linked (GlcNAc...) asparagine glycan is linked to Asn-68. 2 N-linked (GlcNAc...) asparagine glycosylation sites follow: Asn-124 and Asn-135. Residue Ser-137 is the site of GPI-anchor amidated serine attachment. A propeptide spans 138 to 162 (removed in mature form); sequence VGGKNKVATSMSAFGLVAILLFVMF.

This sequence belongs to the plant LTP family.

The protein resides in the cell membrane. Probable lipid transfer protein. The sequence is that of Non-specific lipid transfer protein GPI-anchored 27 from Arabidopsis thaliana (Mouse-ear cress).